A 185-amino-acid chain; its full sequence is DNA-directed RNA polymerase 22 kDa subunit (185 aa).

The protein belongs to the poxviridae DNA-directed RNA polymerase 22 kDa subunit family. As to quaternary structure, the DNA-dependent RNA polymerase used for intermediate and late genes expression consists of eight subunits Rpo30/OPG66, Rpo7/OPG90, Rpo22/OPG103, Rpo147/OPG105, Rpo18/OPG119, Rpo19/OPG131, Rpo132/OPG151 and Rpo35/OPG156. The same holoenzyme, with the addition of the transcription-specificity factor OPG109, is used for early gene expression.

It is found in the virion. It carries out the reaction RNA(n) + a ribonucleoside 5'-triphosphate = RNA(n+1) + diphosphate. Functionally, part of the DNA-dependent RNA polymerase which catalyzes the transcription of viral DNA into RNA using the four ribonucleoside triphosphates as substrates. Responsible for the transcription of early, intermediate and late genes. DNA-dependent RNA polymerase associates with the early transcription factor (ETF), itself composed of OPG118 and OPG133, thereby allowing the early genes transcription. Late transcription, and probably also intermediate transcription, require newly synthesized RNA polymerase. The polypeptide is DNA-directed RNA polymerase 22 kDa subunit (OPG103) (Variola virus (isolate Human/India/Ind3/1967) (VARV)).